The primary structure comprises 656 residues: Protein EMBRYO SAC DEVELOPMENT ARREST 30 (656 aa).

The chain crosses the membrane as a helical; Signal-anchor for type II membrane protein span at residues 9–29 (WIALFVLILSMGSLVVHLSMT). Residue N119 is glycosylated (N-linked (GlcNAc...) asparagine). Positions 381 to 426 (LSELVGPETPLPENTYKMPPRKSDKQLKEEWNKAGPRPRPLPPPPD) are disordered. Positions 401 to 412 (RKSDKQLKEEWN) are enriched in basic and acidic residues. Residues 417 to 426 (RPRPLPPPPD) show a composition bias toward pro residues. N444, N522, N534, and N544 each carry an N-linked (GlcNAc...) asparagine glycan. A disordered region spans residues 631–656 (SETEEEFAKSKVASAFDQDEEWDPND). Positions 647–656 (DQDEEWDPND) are enriched in acidic residues.

Belongs to the glycosyltransferase GT106 family.

It is found in the membrane. Its pathway is glycan metabolism. This Arabidopsis thaliana (Mouse-ear cress) protein is Protein EMBRYO SAC DEVELOPMENT ARREST 30.